The primary structure comprises 325 residues: Glyoxylate/hydroxypyruvate reductase B (325 aa).

Catalysis depends on residues Arg237 and Glu266. His285 serves as the catalytic Proton donor.

This sequence belongs to the D-isomer specific 2-hydroxyacid dehydrogenase family. GhrB subfamily. As to quaternary structure, homodimer.

It is found in the cytoplasm. It carries out the reaction glycolate + NADP(+) = glyoxylate + NADPH + H(+). The enzyme catalyses (R)-glycerate + NAD(+) = 3-hydroxypyruvate + NADH + H(+). It catalyses the reaction (R)-glycerate + NADP(+) = 3-hydroxypyruvate + NADPH + H(+). Its function is as follows. Catalyzes the NADPH-dependent reduction of glyoxylate and hydroxypyruvate into glycolate and glycerate, respectively. The chain is Glyoxylate/hydroxypyruvate reductase B from Serratia proteamaculans (strain 568).